A 192-amino-acid polypeptide reads, in one-letter code: Cytochrome c oxidase assembly protein CtaG (192 aa).

Over 1–9 (MSLSPHQKT) the chain is Cytoplasmic. The chain crosses the membrane as a helical; Signal-anchor for type II membrane protein span at residues 10–30 (AGWLVGVVVVMGAASFAAVPF). Over 31-192 (YDWFCRVTGF…AARPAGIDVN (162 aa)) the chain is Periplasmic.

This sequence belongs to the COX11/CtaG family.

The protein resides in the cell inner membrane. Its function is as follows. Exerts its effect at some terminal stage of cytochrome c oxidase synthesis, probably by being involved in the insertion of the copper B into subunit I. This chain is Cytochrome c oxidase assembly protein CtaG, found in Cereibacter sphaeroides (strain ATCC 17025 / ATH 2.4.3) (Rhodobacter sphaeroides).